The sequence spans 517 residues: Crotonobetaine/carnitine--CoA ligase (517 aa).

This sequence belongs to the ATP-dependent AMP-binding enzyme family.

The enzyme catalyses 4-(trimethylamino)butanoate + ATP + CoA = 4-(trimethylamino)butanoyl-CoA + AMP + diphosphate. It catalyses the reaction crotonobetaine + ATP + CoA = crotonobetainyl-CoA + AMP + diphosphate. It carries out the reaction (R)-carnitine + ATP + CoA = (R)-carnitinyl-CoA + AMP + diphosphate. The protein operates within amine and polyamine metabolism; carnitine metabolism. In terms of biological role, catalyzes the transfer of CoA to carnitine, generating the initial carnitinyl-CoA needed for the CaiB reaction cycle. Also has activity toward crotonobetaine and gamma-butyrobetaine. This is Crotonobetaine/carnitine--CoA ligase from Escherichia coli O9:H4 (strain HS).